A 310-amino-acid chain; its full sequence is tRNA uridine(34) hydroxylase (310 aa).

The region spanning 127–225 (KNQNTIVIDT…YLDEISKEEN (99 aa)) is the Rhodanese domain. Cysteine 185 serves as the catalytic Cysteine persulfide intermediate.

This sequence belongs to the TrhO family.

It catalyses the reaction uridine(34) in tRNA + AH2 + O2 = 5-hydroxyuridine(34) in tRNA + A + H2O. In terms of biological role, catalyzes oxygen-dependent 5-hydroxyuridine (ho5U) modification at position 34 in tRNAs. This Prochlorococcus marinus (strain MIT 9215) protein is tRNA uridine(34) hydroxylase.